The primary structure comprises 468 residues: Chromosomal replication initiator protein DnaA (468 aa).

The domain I, interacts with DnaA modulators stretch occupies residues 1 to 84 (MSSSLWLQCL…RFEVGSKPIS (84 aa)). Residues 84–131 (SAPPRPQRTAADVAAATSAPAQMQARQSLHKPWESRGPEPVDDLNHRS) are domain II. A disordered region spans residues 112–132 (LHKPWESRGPEPVDDLNHRSN). The span at 114–129 (KPWESRGPEPVDDLNH) shows a compositional bias: basic and acidic residues. The segment at 132–348 (NVNPKHKFTN…GALNRVVANA (217 aa)) is domain III, AAA+ region. 4 residues coordinate ATP: Gly-176, Gly-178, Lys-179, and Thr-180. The tract at residues 349–468 (NFTGRAITID…YSNLIRTLSS (120 aa)) is domain IV, binds dsDNA.

Belongs to the DnaA family. Oligomerizes as a right-handed, spiral filament on DNA at oriC.

It localises to the cytoplasm. Functionally, plays an essential role in the initiation and regulation of chromosomal replication. ATP-DnaA binds to the origin of replication (oriC) to initiate formation of the DNA replication initiation complex once per cell cycle. Binds the DnaA box (a 9 base pair repeat at the origin) and separates the double-stranded (ds)DNA. Forms a right-handed helical filament on oriC DNA; dsDNA binds to the exterior of the filament while single-stranded (ss)DNA is stabiized in the filament's interior. The ATP-DnaA-oriC complex binds and stabilizes one strand of the AT-rich DNA unwinding element (DUE), permitting loading of DNA polymerase. After initiation quickly degrades to an ADP-DnaA complex that is not apt for DNA replication. Binds acidic phospholipids. This chain is Chromosomal replication initiator protein DnaA, found in Aliivibrio salmonicida (strain LFI1238) (Vibrio salmonicida (strain LFI1238)).